We begin with the raw amino-acid sequence, 293 residues long: MPFVEEEFEILKPTKALFLVRDVLKCSLKEAQRHLDKQRLKQNQQTVRKSQIIQGVVRLIYFKPNEKQEKLVFEAKDFGVFDKPAQIYTHPKGYFYHESLLDCIQSHFGKNAHPAHRLDYETSGLVLAGKTLQSTKDLKALFMQKKVKKTYLALAHGLVDKSIIINKPILTPQNIQKDLRIRSQISPLGKPSITLVEPLSYNPFLDISLLKITPLTGRTHQIRLHLSSVDHRIVGEGLYGVADENAREYLQLKRENNAPTLMLHAASLEFEFKGAHYKIASPMPERFMPFLKD.

Asp-119 is a catalytic residue.

The protein belongs to the pseudouridine synthase RluA family.

It catalyses the reaction a uridine in RNA = a pseudouridine in RNA. This is an uncharacterized protein from Helicobacter pylori (strain J99 / ATCC 700824) (Campylobacter pylori J99).